The following is a 258-amino-acid chain: Glutamate racemase (258 aa).

Substrate contacts are provided by residues 12 to 13 (DS) and 44 to 45 (YG). Cys-75 acts as the Proton donor/acceptor in catalysis. 76-77 (NT) is a binding site for substrate. Catalysis depends on Cys-186, which acts as the Proton donor/acceptor. Substrate is bound at residue 187–188 (TH).

It belongs to the aspartate/glutamate racemases family.

The enzyme catalyses L-glutamate = D-glutamate. It functions in the pathway cell wall biogenesis; peptidoglycan biosynthesis. In terms of biological role, provides the (R)-glutamate required for cell wall biosynthesis. The polypeptide is Glutamate racemase (Clostridium botulinum (strain Alaska E43 / Type E3)).